Consider the following 648-residue polypeptide: Macrolide export ATP-binding/permease protein MacB (648 aa).

Residues 5-243 form the ABC transporter domain; the sequence is LELKDIRRSY…AGGTEPVVNT (239 aa). 41–48 lines the ATP pocket; the sequence is GASGSGKS. The next 4 membrane-spanning stretches (helical) occupy residues 273–293, 523–543, 576–596, and 600–620; these read LLTMLGIIIGIASVVSIVVVG, LFLTLVAVISLVVGGIGVMNI, AVLVCLVGGALGITLSLLIAF, and LFLPGWEIGFSPLALLLAFLC.

This sequence belongs to the ABC transporter superfamily. Macrolide exporter (TC 3.A.1.122) family. As to quaternary structure, homodimer. Part of the tripartite efflux system MacAB-TolC, which is composed of an inner membrane transporter, MacB, a periplasmic membrane fusion protein, MacA, and an outer membrane component, TolC. The complex forms a large protein conduit and can translocate molecules across both the inner and outer membranes. Interacts with MacA.

Its subcellular location is the cell inner membrane. Functionally, part of the tripartite efflux system MacAB-TolC. MacB is a non-canonical ABC transporter that contains transmembrane domains (TMD), which form a pore in the inner membrane, and an ATP-binding domain (NBD), which is responsible for energy generation. Confers resistance against macrolides. This Shigella boydii serotype 4 (strain Sb227) protein is Macrolide export ATP-binding/permease protein MacB.